The chain runs to 510 residues: MICRSLLLLRSNAASKASSIVKHVAATGCLPEYSSEAPARYFSSESSLQVDSTEENGFKGHGMLAPFTAGWQSTDLHPLVIDRSEGSYVYDINGKKYIDALAGLWSTALGGNEPRLIKAATDQLNKLPFYHSFWNRTTKPSLDLANEILSMFTAREMGKIFFTNSGSEANDSQVKLVWYYNNALGRPNKKKFIARSKSYHGSTLVSASLSGLPALHQKFDLPAPFVLHTDCPHYWRFHLPDETEEEFATRLATNLENLILKEGPETIAAFIAEPVMGAGGVIPPPKTYFEKIQAVLKKYDILLIADEVITAFGRLGTMFGCDMYDIKPDLVSIAKALSSAYMPIGAILVSPEITDVIYSQSNKLGSFAHGFTYSGHPVSCAVAIEALKIYKERNIIEHVQKIAPRFQEGIKAFSGSPIVGEIRGLGLILGTEFVDNKSPNDPFPAEWGVGSLFGAECEKRGMLIRVAGDNIMLSPPLIMTPDEVEEIISKYGDALKATEERIAELKAKRG.

The N-terminal 41 residues, 1–41, are a transit peptide targeting the mitochondrion; sequence MICRSLLLLRSNAASKASSIVKHVAATGCLPEYSSEAPARY. Residue 166–167 coordinates pyridoxal 5'-phosphate; sequence GS. Position 199 (Tyr199) interacts with substrate. Asp306 lines the pyridoxal 5'-phosphate pocket. Position 335 (Lys335) interacts with substrate. Lys335 carries the post-translational modification N6-(pyridoxal phosphate)lysine.

It belongs to the class-III pyridoxal-phosphate-dependent aminotransferase family.

Its subcellular location is the mitochondrion. The enzyme catalyses 4-aminobutanoate + pyruvate = succinate semialdehyde + L-alanine. It carries out the reaction 4-aminobutanoate + glyoxylate = succinate semialdehyde + glycine. Transaminase that degrades gamma-amino butyric acid (GABA). The polypeptide is Probable gamma-aminobutyrate transaminase 3, mitochondrial (Oryza sativa subsp. indica (Rice)).